The primary structure comprises 334 residues: Spermidine synthase 1 (334 aa).

The segment at 1–37 (MAAPENTLHSTDSPLKRQREDEVNGVSDTLSKEPQPN) is disordered. The segment covering 26–37 (VSDTLSKEPQPN) has biased composition (polar residues). The region spanning 44–281 (PGWFSEISPM…GMIGFMLCST (238 aa)) is the PABS domain. S-adenosyl 3-(methylsulfanyl)propylamine is bound at residue Gln-75. Tyr-105 provides a ligand contact to putrescine. Residues Gln-106, Asp-130, Glu-150, 181–182 (DG), and Asp-200 contribute to the S-adenosyl 3-(methylsulfanyl)propylamine site. Residue Asp-200 is the Proton acceptor of the active site. Putrescine contacts are provided by residues 200-203 (DSSD) and Tyr-269.

Belongs to the spermidine/spermine synthase family.

The catalysed reaction is S-adenosyl 3-(methylsulfanyl)propylamine + putrescine = S-methyl-5'-thioadenosine + spermidine + H(+). It functions in the pathway amine and polyamine biosynthesis; spermidine biosynthesis; spermidine from putrescine: step 1/1. The protein is Spermidine synthase 1 (SPDSYN1) of Pisum sativum (Garden pea).